Here is a 145-residue protein sequence, read N- to C-terminus: uncharacterized protein (145 aa).

This is an uncharacterized protein from Bacillus subtilis (strain 168).